A 302-amino-acid chain; its full sequence is Phospho-N-acetylmuramoyl-pentapeptide-transferase (302 aa).

The next 10 membrane-spanning stretches (helical) occupy residues 1 to 21 (MIAA…NLFR), 42 to 62 (GTPT…GVLS), 67 to 87 (VILT…FLSI), 101 to 121 (ALLQ…ETAV), 123 to 143 (FFGI…IVIV), 154 to 174 (GLDG…WFFL), 178 to 198 (GFSE…LIFN), 204 to 224 (IFMG…VSVL), 229 to 249 (FYLI…ILQI), and 279 to 299 (IVAV…EVFG).

This sequence belongs to the glycosyltransferase 4 family. MraY subfamily. It depends on Mg(2+) as a cofactor.

Its subcellular location is the cell inner membrane. The enzyme catalyses UDP-N-acetyl-alpha-D-muramoyl-L-alanyl-gamma-D-glutamyl-meso-2,6-diaminopimeloyl-D-alanyl-D-alanine + di-trans,octa-cis-undecaprenyl phosphate = di-trans,octa-cis-undecaprenyl diphospho-N-acetyl-alpha-D-muramoyl-L-alanyl-D-glutamyl-meso-2,6-diaminopimeloyl-D-alanyl-D-alanine + UMP. Its pathway is cell wall biogenesis; peptidoglycan biosynthesis. Its function is as follows. Catalyzes the initial step of the lipid cycle reactions in the biosynthesis of the cell wall peptidoglycan: transfers peptidoglycan precursor phospho-MurNAc-pentapeptide from UDP-MurNAc-pentapeptide onto the lipid carrier undecaprenyl phosphate, yielding undecaprenyl-pyrophosphoryl-MurNAc-pentapeptide, known as lipid I. The polypeptide is Phospho-N-acetylmuramoyl-pentapeptide-transferase (Thermotoga neapolitana (strain ATCC 49049 / DSM 4359 / NBRC 107923 / NS-E)).